The following is a 3159-amino-acid chain: E1A-binding protein p400 (3159 aa).

Over residues 1-16 the composition is skewed to polar residues; the sequence is MHHGTGPQNVQHQLQR. 7 disordered regions span residues 1 to 65, 125 to 154, 212 to 261, 282 to 359, 545 to 594, 633 to 658, and 684 to 770; these read MHHG…MNRS, SPLS…RAGA, PGTP…HITT, VLQG…PASP, LMPT…PQLP, QQPN…AQLA, and TRLP…SQDT. Residues 31–41 show a composition bias toward pro residues; the sequence is HPNPPPSPAAP. The segment covering 42 to 55 has biased composition (low complexity); sequence FAPSASPSAPQSPS. Serine 53 bears the Phosphoserine mark. Residues 56–65 are compositionally biased toward polar residues; the sequence is YQIQQLMNRS. 2 stretches are compositionally biased toward low complexity: residues 125–137 and 237–256; these read SPLS…QSPT and LGPQ…LASP. Serine 135 carries the post-translational modification Phosphoserine. A phosphoserine mark is found at serine 315 and serine 321. Residues 558-571 show a composition bias toward low complexity; it reads QAAQLAGQRQSQQQ. A compositionally biased stretch (polar residues) spans 572-585; the sequence is YDPSTGPPVQNAAS. 2 stretches are compositionally biased toward pro residues: residues 637–653 and 689–698; these read VPIP…PPSQ and DPAPPCPRPL. Positions 699–711 are enriched in low complexity; the sequence is PTSSTSSLAPVSG. Polar residues-rich tracts occupy residues 725–742 and 751–760; these read NRPS…TSRT and TKPQSPAQNA. Phosphoserine occurs at positions 736 and 755. Over residues 761–770 the composition is skewed to low complexity; it reads TSSQDSSQDT. Residues 799–871 form the HSA domain; it reads LPKLQEAPRP…EQSRLRRIAA (73 aa). Disordered regions lie at residues 915–967 and 997–1024; these read ELRP…GVVD and SSQW…GDRE. Residues serine 928 and serine 941 each carry the phosphoserine modification. A Phosphothreonine modification is found at threonine 945. Acidic residues-rich tracts occupy residues 945 to 962 and 1008 to 1019; these read TDDE…EEAN and EDTSGEEDADDC. Residues 951–1365 are interactions with RUVBL1 and RUVBL2; it reads DEEETIEEEE…NVLSILVRLQ (415 aa). Serine 1011 is subject to Phosphoserine. In terms of domain architecture, Helicase ATP-binding spans 1103-1268; sequence AKLYRKNLNG…WTMVHFLVPG (166 aa). ATP is bound at residue 1116–1123; the sequence is DEAGLGKT. Residues 1219–1222 carry the DEAH box-like motif; the sequence is DEMQ. The disordered stretch occupies residues 1467–1582; sequence VQYGQKPEGR…QAPSHAAGQS (116 aa). Lysine 1472 carries the N6-acetyllysine modification. Low complexity-rich tracts occupy residues 1481–1498 and 1538–1565; these read PSTH…SAAP and PASA…ASTP. Residues serine 1547, serine 1728, and serine 1732 each carry the phosphoserine modification. The disordered stretch occupies residues 1787 to 1807; it reads GSLDGRRGKEAGPAHSYTSSS. Basic and acidic residues predominate over residues 1789–1798; the sequence is LDGRRGKEAG. Positions 1899-2056 constitute a Helicase C-terminal domain; the sequence is KLEALAILLQ…GNDYSMAFLT (158 aa). 2 disordered regions span residues 2119 to 2144 and 2287 to 2311; these read KSAQ…PCDE and KERK…GEAV. N6-acetyllysine occurs at positions 2349 and 2356. Residues 2360–2429 enclose the Myb-like domain; sequence EPGQDNPEWL…QCRNRYENVI (70 aa). Disordered stretches follow at residues 2524 to 2602 and 2665 to 2688; these read KEKK…AQPA and TPGG…GSPA. Residues 2524–2789 are interaction with ZNF42; the sequence is KEKKALADQQ…QQQQQTTTTS (266 aa). The span at 2530–2540 shows a compositional bias: low complexity; sequence ADQQKAQQPAV. Composition is skewed to pro residues over residues 2541–2563 and 2572–2589; these read AQPP…PLPQ and PAGP…PQTQ. The span at 2590 to 2602 shows a compositional bias: low complexity; that stretch reads PQPVQAPAKAQPA. Serine 2686 carries the post-translational modification Phosphoserine. The residue at position 2813 (threonine 2813) is a Phosphothreonine. Disordered regions lie at residues 2821 to 2869 and 3115 to 3159; these read QKQK…TAPR and APLQ…PPCQ. Residues 2828–2843 show a composition bias toward pro residues; that stretch reads PPQPPPPQAQSAPPQP. Over residues 2844 to 2866 the composition is skewed to low complexity; the sequence is TAQVQVQTSQPPQQQSPQLTTVT. The segment covering 3129-3140 has biased composition (polar residues); that stretch reads PASSDSPSQQPK.

This sequence belongs to the SNF2/RAD54 helicase family. SWR1 subfamily. Component of the NuA4 histone acetyltransferase complex which contains the catalytic subunit KAT5/TIP60 and the subunits EP400, TRRAP/PAF400, BRD8/SMAP, EPC1, DMAP1/DNMAP1, RUVBL1/TIP49, RUVBL2, ING3, actin, ACTL6A/BAF53A, MORF4L1/MRG15, MORF4L2/MRGX, MRGBP, YEATS4/GAS41, VPS72/YL1 and MEAF6. May also participate in the formation of NuA4 related complexes which lack the KAT5/TIP60 catalytic subunit, but which include the SWI/SNF related protein SRCAP. The NuA4 complex interacts with MYC and the adenovirus E1A protein. EP400 interacts with TRRAP, RUVBL1 and RUVBL2. Component of a SWR1-like complex. Interacts with ZNF42. Interacts with PHF5A. Interacts with human cytomegalovirus UL27. Interacts with human adenovirus 5 E1A protein; this interaction stabilizes MYC. In terms of tissue distribution, ubiquitously expressed.

It is found in the nucleus. In terms of biological role, component of the NuA4 histone acetyltransferase complex which is involved in transcriptional activation of select genes principally by acetylation of nucleosomal histones H4 and H2A. This modification may both alter nucleosome - DNA interactions and promote interaction of the modified histones with other proteins which positively regulate transcription. May be required for transcriptional activation of E2F1 and MYC target genes during cellular proliferation. The NuA4 complex ATPase and helicase activities seem to be, at least in part, contributed by the association of RUVBL1 and RUVBL2 with EP400. May regulate ZNF42 transcription activity. Component of a SWR1-like complex that specifically mediates the removal of histone H2A.Z/H2AZ1 from the nucleosome. In Homo sapiens (Human), this protein is E1A-binding protein p400 (EP400).